The sequence spans 116 residues: T cell receptor alpha variable 19 (116 aa).

The signal sequence occupies residues 1 to 21 (MLTASLLRAVIASICVVSSMA). Positions 22 to 116 (QKVTQAQTEI…SAVYFCALSE (95 aa)) constitute an Ig-like domain. A disulfide bridge connects residues Cys-43 and Cys-112. Asn-96 carries an N-linked (GlcNAc...) asparagine glycan.

In terms of assembly, alpha-beta TR is a heterodimer composed of an alpha and beta chain; disulfide-linked. The alpha-beta TR is associated with the transmembrane signaling CD3 coreceptor proteins to form the TR-CD3 (TcR or TCR). The assembly of alpha-beta TR heterodimers with CD3 occurs in the endoplasmic reticulum where a single alpha-beta TR heterodimer associates with one CD3D-CD3E heterodimer, one CD3G-CD3E heterodimer and one CD247 homodimer forming a stable octameric structure. CD3D-CD3E and CD3G-CD3E heterodimers preferentially associate with TR alpha and TR beta chains, respectively. The association of the CD247 homodimer is the last step of TcR assembly in the endoplasmic reticulum and is required for transport to the cell surface.

It is found in the cell membrane. Its function is as follows. V region of the variable domain of T cell receptor (TR) alpha chain that participates in the antigen recognition. Alpha-beta T cell receptors are antigen specific receptors which are essential to the immune response and are present on the cell surface of T lymphocytes. Recognize peptide-major histocompatibility (MH) (pMH) complexes that are displayed by antigen presenting cells (APC), a prerequisite for efficient T cell adaptive immunity against pathogens. Binding of alpha-beta TR to pMH complex initiates TR-CD3 clustering on the cell surface and intracellular activation of LCK that phosphorylates the ITAM motifs of CD3G, CD3D, CD3E and CD247 enabling the recruitment of ZAP70. In turn ZAP70 phosphorylates LAT, which recruits numerous signaling molecules to form the LAT signalosome. The LAT signalosome propagates signal branching to three major signaling pathways, the calcium, the mitogen-activated protein kinase (MAPK) kinase and the nuclear factor NF-kappa-B (NF-kB) pathways, leading to the mobilization of transcription factors that are critical for gene expression and essential for T cell growth and differentiation. The T cell repertoire is generated in the thymus, by V-(D)-J rearrangement. This repertoire is then shaped by intrathymic selection events to generate a peripheral T cell pool of self-MH restricted, non-autoaggressive T cells. Post-thymic interaction of alpha-beta TR with the pMH complexes shapes TR structural and functional avidity. The polypeptide is T cell receptor alpha variable 19 (Homo sapiens (Human)).